A 377-amino-acid chain; its full sequence is Phospho-N-acetylmuramoyl-pentapeptide-transferase (377 aa).

The next 11 helical transmembrane spans lie at 9–29 (YITL…LVAG), 59–79 (TPTM…LLWA), 85–105 (FVWV…MDDY), 122–142 (FFWQ…AVSA), 155–175 (WVGS…VPFF), 178–198 (VSYP…IVGT), 210–230 (GLAI…AYVV), 247–267 (AAEL…FLWF), 274–294 (VFMG…IAVI), 299–319 (IVLF…MVQV), and 354–374 (QVVV…LSTL).

It belongs to the glycosyltransferase 4 family. MraY subfamily. Requires Mg(2+) as cofactor.

It localises to the cell inner membrane. It carries out the reaction UDP-N-acetyl-alpha-D-muramoyl-L-alanyl-gamma-D-glutamyl-meso-2,6-diaminopimeloyl-D-alanyl-D-alanine + di-trans,octa-cis-undecaprenyl phosphate = di-trans,octa-cis-undecaprenyl diphospho-N-acetyl-alpha-D-muramoyl-L-alanyl-D-glutamyl-meso-2,6-diaminopimeloyl-D-alanyl-D-alanine + UMP. The protein operates within cell wall biogenesis; peptidoglycan biosynthesis. Functionally, catalyzes the initial step of the lipid cycle reactions in the biosynthesis of the cell wall peptidoglycan: transfers peptidoglycan precursor phospho-MurNAc-pentapeptide from UDP-MurNAc-pentapeptide onto the lipid carrier undecaprenyl phosphate, yielding undecaprenyl-pyrophosphoryl-MurNAc-pentapeptide, known as lipid I. The sequence is that of Phospho-N-acetylmuramoyl-pentapeptide-transferase from Bordetella bronchiseptica (strain ATCC BAA-588 / NCTC 13252 / RB50) (Alcaligenes bronchisepticus).